The following is a 345-amino-acid chain: Dimethyladenosine transferase 1, mitochondrial (345 aa).

The N-terminal 27 residues, 1–27 (MAASGKLGTFRLPPLPTIREIIKLFGL), are a transit peptide targeting the mitochondrion. Residues 35–38 (QNFL), asparagine 36, leucine 38, glycine 63, glutamate 85, aspartate 111, and asparagine 141 each bind S-adenosyl-L-methionine.

The protein belongs to the class I-like SAM-binding methyltransferase superfamily. rRNA adenine N(6)-methyltransferase family. KsgA subfamily. In terms of assembly, interacts with mitochondrial RNA polymerase POLRMT. Interacts with TFAM.

The protein localises to the mitochondrion. S-adenosyl-L-methionine-dependent methyltransferase which specifically dimethylates mitochondrial 12S rRNA at the conserved stem loop. Also required for basal transcription of mitochondrial DNA, probably via its interaction with POLRMT and TFAM. Stimulates transcription independently of the methyltransferase activity. The chain is Dimethyladenosine transferase 1, mitochondrial (Tfb1m) from Rattus norvegicus (Rat).